The sequence spans 869 residues: Aconitate hydratase B (869 aa).

Residues Arg191, 244-246, 417-419, and Ser501 contribute to the substrate site; these read SSR and QDT. Positions 713, 772, and 775 each coordinate [4Fe-4S] cluster. Substrate-binding residues include Arg794 and Arg799.

This sequence belongs to the aconitase/IPM isomerase family. In terms of assembly, monomer. The cofactor is [4Fe-4S] cluster.

The catalysed reaction is citrate = D-threo-isocitrate. The enzyme catalyses (2S,3R)-3-hydroxybutane-1,2,3-tricarboxylate = 2-methyl-cis-aconitate + H2O. Its pathway is carbohydrate metabolism; tricarboxylic acid cycle; isocitrate from oxaloacetate: step 2/2. It participates in organic acid metabolism; propanoate degradation. Its function is as follows. Involved in the catabolism of short chain fatty acids (SCFA) via the tricarboxylic acid (TCA)(acetyl degradation route) and probably via the 2-methylcitrate cycle I (propionate degradation route). Catalyzes the reversible isomerization of citrate to isocitrate via cis-aconitate. Catalyzes the hydration of 2-methyl-cis-aconitate to yield (2R,3S)-2-methylisocitrate. The apo form of AcnB functions as a RNA-binding regulatory protein. The polypeptide is Aconitate hydratase B (acnB) (Pseudomonas aeruginosa (strain ATCC 15692 / DSM 22644 / CIP 104116 / JCM 14847 / LMG 12228 / 1C / PRS 101 / PAO1)).